The sequence spans 375 residues: Probable UDP-N-acetylglucosamine 2-epimerase (375 aa).

Belongs to the UDP-N-acetylglucosamine 2-epimerase family.

The protein resides in the cytoplasm. The catalysed reaction is UDP-N-acetyl-alpha-D-glucosamine = UDP-N-acetyl-alpha-D-mannosamine. It functions in the pathway glycan metabolism; exopolysaccharide EPS I biosynthesis. Its function is as follows. May be involved in synthesis of N-acetyltrideoxygalactose, a component of exopolysaccharide EPS I which functions as a virulence factor. The sequence is that of Probable UDP-N-acetylglucosamine 2-epimerase (epsC) from Ralstonia solanacearum (Pseudomonas solanacearum).